The following is a 539-amino-acid chain: UDP-N-acetylmuramate--L-alanine ligase (539 aa).

Position 165–171 (165–171) interacts with ATP; that stretch reads GTHGKTT.

This sequence belongs to the MurCDEF family.

It is found in the cytoplasm. It catalyses the reaction UDP-N-acetyl-alpha-D-muramate + L-alanine + ATP = UDP-N-acetyl-alpha-D-muramoyl-L-alanine + ADP + phosphate + H(+). The protein operates within cell wall biogenesis; peptidoglycan biosynthesis. Its function is as follows. Cell wall formation. This is UDP-N-acetylmuramate--L-alanine ligase from Trichodesmium erythraeum (strain IMS101).